We begin with the raw amino-acid sequence, 132 residues long: L-ectoine synthase (132 aa).

It belongs to the ectoine synthase family.

The enzyme catalyses (2S)-4-acetamido-2-aminobutanoate = L-ectoine + H2O. Its pathway is amine and polyamine biosynthesis; ectoine biosynthesis; L-ectoine from L-aspartate 4-semialdehyde: step 3/3. Functionally, catalyzes the circularization of gamma-N-acetyl-alpha,gamma-diaminobutyric acid (ADABA) to ectoine (1,4,5,6-tetrahydro-2-methyl-4-pyrimidine carboxylic acid), which is an excellent osmoprotectant. In Teredinibacter turnerae (strain ATCC 39867 / T7901), this protein is L-ectoine synthase.